A 188-amino-acid polypeptide reads, in one-letter code: Putative manganese efflux pump MntP (188 aa).

The next 6 helical transmembrane spans lie at 3 to 23, 39 to 59, 65 to 85, 104 to 124, 125 to 145, and 167 to 187; these read MITL…VALG, LGWH…LAGL, IETY…GKMI, GMSL…VGLS, LAIV…IAGV, and IAGG…HTLG.

It belongs to the MntP (TC 9.B.29) family.

Its subcellular location is the cell inner membrane. Probably functions as a manganese efflux pump. This Syntrophotalea carbinolica (strain DSM 2380 / NBRC 103641 / GraBd1) (Pelobacter carbinolicus) protein is Putative manganese efflux pump MntP.